We begin with the raw amino-acid sequence, 413 residues long: Palmitoyltransferase ZDHHC6 (413 aa).

At 1–24 the chain is on the cytoplasmic side; that stretch reads MGIFCSVIKFENLQDLRRLCHWGP. A helical membrane pass occupies residues 25-45; the sequence is IIALGVIAICSTMAMIDSVLW. Topologically, residues 46-57 are lumenal; sequence YWPLHTTGGSVN. Residues 58-78 traverse the membrane as a helical segment; it reads FIMLINWTVMILYNYFNAMFA. Over 79–143 the chain is Cytoplasmic; the sequence is GPGFVPRGWK…NCCGHQNHAS (65 aa). The DHHC domain maps to 99-149; sequence QYCKVCQAYKAPRSHHCRKCNRCVMKMDHHCPWINNCCGHQNHASFTLFLL. The active-site S-palmitoyl cysteine intermediate is Cys-129. The helical transmembrane segment at 144 to 164 threads the bilayer; the sequence is FTLFLLLAPLGCTHAAFIFVM. Over 165 to 194 the chain is Lumenal; the sequence is TMYTQLYNRLSFGWNTVKIDMSAARRDPPP. Residues 195–215 form a helical membrane-spanning segment; sequence IVPFGLAAFAATLFALGLALG. The Cytoplasmic segment spans residues 216-413; the sequence is TTIAVGMLFF…PAPEGEKKNR (198 aa). An SH3 domain is found at 313 to 398; that stretch reads VRSVRYKVIE…PRNCVEKCPC (86 aa). 3 S-palmitoyl cysteine lipidation sites follow: Cys-328, Cys-329, and Cys-343. The short motif at 410–413 is the Di-lysine motif element; sequence KKNR.

Belongs to the DHHC palmitoyltransferase family. Homooligomerizes. Interacts with SELENOK. In terms of processing, palmitoylated at 3 different sites by ZDHHC16. The combination of the different palmitoylation events strongly affects the quaternary assembly of ZDHHC6, its localization, stability and function. Palmitoylation at Cys-328 accelerates the turnover of ZDHHC6. Depalmitoylated by LYPLA2.

It localises to the endoplasmic reticulum membrane. The catalysed reaction is L-cysteinyl-[protein] + hexadecanoyl-CoA = S-hexadecanoyl-L-cysteinyl-[protein] + CoA. The enzyme catalyses L-cysteinyl-[protein] + octadecanoyl-CoA = S-octadecanoyl-L-cysteinyl-[protein] + CoA. Its function is as follows. Endoplasmic reticulum palmitoyl acyltransferase that mediates palmitoylation of proteins such as AMFR, CALX, ITPR1 and TFRC. Palmitoylates calnexin (CALX), which is required for its association with the ribosome-translocon complex and efficient folding of glycosylated proteins. Mediates palmitoylation of AMFR, promoting AMFR distribution to the peripheral endoplasmic reticulum. Together with SELENOK, palmitoylates ITPR1 in immune cells, leading to regulate ITPR1 stability and function. Stearoyltransferase that mediates stearoylation of TFRC to inhibit TFRC-mediated activation of the JNK pathway and mitochondrial fragmentation. This chain is Palmitoyltransferase ZDHHC6, found in Mus musculus (Mouse).